A 667-amino-acid polypeptide reads, in one-letter code: Serine/threonine-protein kinase BUR1 (667 aa).

Residues Tyr-60–Phe-378 form the Protein kinase domain. Residues Leu-66–Val-74 and Lys-89 contribute to the ATP site. The active-site Proton acceptor is the Asp-207. A disordered region spans residues His-408 to Tyr-667. Residues Lys-432–Gln-443 show a composition bias toward basic and acidic residues. Positions Asn-494 to Arg-516 are enriched in polar residues. Low complexity predominate over residues Tyr-541–Arg-556. Composition is skewed to polar residues over residues Asp-582–Ser-594, Ser-602–Ile-611, and Asn-622–Gln-632. Residues Asp-633–Tyr-667 show a composition bias toward basic and acidic residues.

It belongs to the protein kinase superfamily. CMGC Ser/Thr protein kinase family. CDC2/CDKX subfamily.

The protein resides in the nucleus. The enzyme catalyses L-seryl-[protein] + ATP = O-phospho-L-seryl-[protein] + ADP + H(+). It catalyses the reaction L-threonyl-[protein] + ATP = O-phospho-L-threonyl-[protein] + ADP + H(+). It carries out the reaction [DNA-directed RNA polymerase] + ATP = phospho-[DNA-directed RNA polymerase] + ADP + H(+). Functionally, serine/threonine-protein kinase involved in transcription regulation. Phosphorylates the UBC2/RAD6 ubiquitin-conjugating enzyme (E2), leading to monoubiquitination of histone H2B and the silencing of telomeric-associated genes. Also required for histone H3 methylation. Necessary for the recovery from pheromone-induced growth arrest in the cell cycle G1 phase. The protein is Serine/threonine-protein kinase BUR1 (BUR1) of Candida glabrata (strain ATCC 2001 / BCRC 20586 / JCM 3761 / NBRC 0622 / NRRL Y-65 / CBS 138) (Yeast).